A 305-amino-acid polypeptide reads, in one-letter code: Protein MFI (305 aa).

As to quaternary structure, can homodimerize. Interacts with MFF; the interaction inhibits MFF interaction with DNM1L.

It localises to the cytoplasm. The protein localises to the cytosol. The protein resides in the mitochondrion outer membrane. Its function is as follows. Acts as an inhibitor of mitochondrial fission. Interacts with MFF and prevents DNM1L recruitment to mitochondria, promoting a more fused mitochondrial network. The sequence is that of Protein MFI from Rattus norvegicus (Rat).